A 620-amino-acid polypeptide reads, in one-letter code: Ion-translocating oxidoreductase complex subunit C (620 aa).

4Fe-4S ferredoxin-type domains follow at residues 366 to 397 (TEMG…QQLY) and 407 to 436 (KARN…VQYY). [4Fe-4S] cluster contacts are provided by Cys-377, Cys-380, Cys-383, Cys-387, Cys-416, Cys-419, Cys-422, and Cys-426.

Belongs to the 4Fe4S bacterial-type ferredoxin family. RnfC subfamily. As to quaternary structure, the complex is composed of six subunits: RnfA, RnfB, RnfC, RnfD, RnfE and RnfG. [4Fe-4S] cluster serves as cofactor.

It localises to the cell inner membrane. Part of a membrane-bound complex that couples electron transfer with translocation of ions across the membrane. This chain is Ion-translocating oxidoreductase complex subunit C, found in Yersinia pestis bv. Antiqua (strain Antiqua).